The primary structure comprises 144 residues: 3-hydroxyacyl-[acyl-carrier-protein] dehydratase FabZ (144 aa).

The active site involves histidine 48.

This sequence belongs to the thioester dehydratase family. FabZ subfamily.

Its subcellular location is the cytoplasm. It carries out the reaction a (3R)-hydroxyacyl-[ACP] = a (2E)-enoyl-[ACP] + H2O. Involved in unsaturated fatty acids biosynthesis. Catalyzes the dehydration of short chain beta-hydroxyacyl-ACPs and long chain saturated and unsaturated beta-hydroxyacyl-ACPs. The sequence is that of 3-hydroxyacyl-[acyl-carrier-protein] dehydratase FabZ from Listeria innocua serovar 6a (strain ATCC BAA-680 / CLIP 11262).